A 445-amino-acid polypeptide reads, in one-letter code: 3-phosphoshikimate 1-carboxyvinyltransferase (445 aa).

3 residues coordinate 3-phosphoshikimate: Lys28, Ser29, and Arg33. Lys28 provides a ligand contact to phosphoenolpyruvate. Phosphoenolpyruvate-binding residues include Gly101 and Arg129. Residues Ser175, Gln177, Asp328, and Lys355 each coordinate 3-phosphoshikimate. Gln177 contacts phosphoenolpyruvate. Asp328 acts as the Proton acceptor in catalysis. Residues Arg359 and Arg402 each coordinate phosphoenolpyruvate.

The protein belongs to the EPSP synthase family. In terms of assembly, monomer.

It is found in the cytoplasm. It carries out the reaction 3-phosphoshikimate + phosphoenolpyruvate = 5-O-(1-carboxyvinyl)-3-phosphoshikimate + phosphate. The protein operates within metabolic intermediate biosynthesis; chorismate biosynthesis; chorismate from D-erythrose 4-phosphate and phosphoenolpyruvate: step 6/7. Its function is as follows. Catalyzes the transfer of the enolpyruvyl moiety of phosphoenolpyruvate (PEP) to the 5-hydroxyl of shikimate-3-phosphate (S3P) to produce enolpyruvyl shikimate-3-phosphate and inorganic phosphate. The polypeptide is 3-phosphoshikimate 1-carboxyvinyltransferase (Bradyrhizobium sp. (strain BTAi1 / ATCC BAA-1182)).